The sequence spans 238 residues: Gas vesicle protein F (238 aa).

It belongs to the gas vesicle GvpF/GvpL family. In terms of assembly, binds GvpA.

The protein localises to the gas vesicle. Its function is as follows. A minor component of the gas vesicle, may be involved in preventing GvpA aggregation during gas vesicle nucleation. Gas vesicles are hollow, gas filled proteinaceous nanostructures found in some microorganisms. It is not clear what function gas vesicles perform in soil bacteria. The protein is Gas vesicle protein F of Streptomyces sp. (strain CB03234).